Reading from the N-terminus, the 259-residue chain is Phosphate import ATP-binding protein PstB (259 aa).

Positions 13-254 (LEVNNLNFHY…PRLQRTEDYI (242 aa)) constitute an ABC transporter domain. An ATP-binding site is contributed by 45–52 (GPSGCGKS).

Belongs to the ABC transporter superfamily. Phosphate importer (TC 3.A.1.7) family. The complex is composed of two ATP-binding proteins (PstB), two transmembrane proteins (PstC and PstA) and a solute-binding protein (PstS).

Its subcellular location is the cell inner membrane. It carries out the reaction phosphate(out) + ATP + H2O = ADP + 2 phosphate(in) + H(+). Functionally, part of the ABC transporter complex PstSACB involved in phosphate import. Responsible for energy coupling to the transport system. This chain is Phosphate import ATP-binding protein PstB, found in Pasteurella multocida (strain Pm70).